We begin with the raw amino-acid sequence, 176 residues long: Protein KleF (176 aa).

This is Protein KleF (kleF) from Escherichia coli.